We begin with the raw amino-acid sequence, 311 residues long: Malate dehydrogenase (311 aa).

Residues 7–13 (GAAGGIG) and Asp34 each bind NAD(+). 2 residues coordinate substrate: Arg81 and Arg87. NAD(+) contacts are provided by residues Asn94 and 117–119 (ITN). Substrate contacts are provided by Asn119 and Arg153. Catalysis depends on His177, which acts as the Proton acceptor. Met227 contacts NAD(+).

This sequence belongs to the LDH/MDH superfamily. MDH type 1 family. Homodimer.

It catalyses the reaction (S)-malate + NAD(+) = oxaloacetate + NADH + H(+). Catalyzes the reversible oxidation of malate to oxaloacetate. In Shewanella putrefaciens (strain CN-32 / ATCC BAA-453), this protein is Malate dehydrogenase.